The sequence spans 107 residues: Early E3A 12.5 kDa protein (107 aa).

This sequence belongs to the adenoviridae E3A-2 family.

This chain is Early E3A 12.5 kDa protein, found in Homo sapiens (Human).